Consider the following 122-residue polypeptide: MIQQESRLRVADNTGAKEILCIRVLGGSGRRYAGIGDVIVATVKDAIPGGNVKKGDVVKAVIVRTVKERRRPDGSYIRFDENAAVILKNDGDPRGTRIFGPVGRELREKKFMKIISLAPEVL.

It belongs to the universal ribosomal protein uL14 family. As to quaternary structure, part of the 50S ribosomal subunit. Forms a cluster with proteins L3 and L19. In the 70S ribosome, L14 and L19 interact and together make contacts with the 16S rRNA in bridges B5 and B8.

In terms of biological role, binds to 23S rRNA. Forms part of two intersubunit bridges in the 70S ribosome. This is Large ribosomal subunit protein uL14 from Streptomyces avermitilis (strain ATCC 31267 / DSM 46492 / JCM 5070 / NBRC 14893 / NCIMB 12804 / NRRL 8165 / MA-4680).